Here is a 430-residue protein sequence, read N- to C-terminus: S-adenosylmethionine synthase (430 aa).

H14 is an ATP binding site. D16 provides a ligand contact to Mg(2+). Residue E42 participates in K(+) binding. 2 residues coordinate L-methionine: E55 and Q98. The flexible loop stretch occupies residues 98 to 108; the sequence is QSADINRGVER. Residues 164–166, 254–255, D263, 269–270, A286, and K290 each bind ATP; these read DAK, KF, and RK. Position 263 (D263) interacts with L-methionine. K294 serves as a coordination point for L-methionine.

It belongs to the AdoMet synthase family. In terms of assembly, homotetramer; dimer of dimers. It depends on Mg(2+) as a cofactor. The cofactor is K(+).

It localises to the cytoplasm. It catalyses the reaction L-methionine + ATP + H2O = S-adenosyl-L-methionine + phosphate + diphosphate. It participates in amino-acid biosynthesis; S-adenosyl-L-methionine biosynthesis; S-adenosyl-L-methionine from L-methionine: step 1/1. In terms of biological role, catalyzes the formation of S-adenosylmethionine (AdoMet) from methionine and ATP. The overall synthetic reaction is composed of two sequential steps, AdoMet formation and the subsequent tripolyphosphate hydrolysis which occurs prior to release of AdoMet from the enzyme. The sequence is that of S-adenosylmethionine synthase from Bacteroides fragilis (strain ATCC 25285 / DSM 2151 / CCUG 4856 / JCM 11019 / LMG 10263 / NCTC 9343 / Onslow / VPI 2553 / EN-2).